Here is a 122-residue protein sequence, read N- to C-terminus: Small ribosomal subunit protein uS13 (122 aa).

The disordered stretch occupies residues 94–122 (KQLPVRGQRTHTNARTRKGKAKPIAGKKK).

It belongs to the universal ribosomal protein uS13 family. In terms of assembly, part of the 30S ribosomal subunit. Forms a loose heterodimer with protein S19. Forms two bridges to the 50S subunit in the 70S ribosome.

In terms of biological role, located at the top of the head of the 30S subunit, it contacts several helices of the 16S rRNA. In the 70S ribosome it contacts the 23S rRNA (bridge B1a) and protein L5 of the 50S subunit (bridge B1b), connecting the 2 subunits; these bridges are implicated in subunit movement. Contacts the tRNAs in the A and P-sites. This is Small ribosomal subunit protein uS13 from Methylorubrum populi (strain ATCC BAA-705 / NCIMB 13946 / BJ001) (Methylobacterium populi).